We begin with the raw amino-acid sequence, 140 residues long: Putative nickel-responsive regulator (140 aa).

His-81, His-92, His-94, and Cys-100 together coordinate Ni(2+).

The protein belongs to the transcriptional regulatory CopG/NikR family. Requires Ni(2+) as cofactor.

Transcriptional regulator. This is Putative nickel-responsive regulator from Methanocella arvoryzae (strain DSM 22066 / NBRC 105507 / MRE50).